The chain runs to 277 residues: Peptide deformylase 1A, chloroplastic (277 aa).

The Zn(2+) site is built by cysteine 196 and histidine 238. Glutamate 239 is a catalytic residue. Residue histidine 242 coordinates Zn(2+).

This sequence belongs to the polypeptide deformylase family. The cofactor is Zn(2+).

It localises to the plastid. The protein localises to the chloroplast stroma. The catalysed reaction is N-terminal N-formyl-L-methionyl-[peptide] + H2O = N-terminal L-methionyl-[peptide] + formate. Its function is as follows. Removes the formyl group from the N-terminal Met of newly synthesized proteins. The protein is Peptide deformylase 1A, chloroplastic (PDF1A) of Solanum lycopersicum (Tomato).